A 157-amino-acid polypeptide reads, in one-letter code: SsrA-binding protein (157 aa).

This sequence belongs to the SmpB family.

Its subcellular location is the cytoplasm. Its function is as follows. Required for rescue of stalled ribosomes mediated by trans-translation. Binds to transfer-messenger RNA (tmRNA), required for stable association of tmRNA with ribosomes. tmRNA and SmpB together mimic tRNA shape, replacing the anticodon stem-loop with SmpB. tmRNA is encoded by the ssrA gene; the 2 termini fold to resemble tRNA(Ala) and it encodes a 'tag peptide', a short internal open reading frame. During trans-translation Ala-aminoacylated tmRNA acts like a tRNA, entering the A-site of stalled ribosomes, displacing the stalled mRNA. The ribosome then switches to translate the ORF on the tmRNA; the nascent peptide is terminated with the 'tag peptide' encoded by the tmRNA and targeted for degradation. The ribosome is freed to recommence translation, which seems to be the essential function of trans-translation. This Rhodococcus jostii (strain RHA1) protein is SsrA-binding protein.